The primary structure comprises 377 residues: Succinyl-diaminopimelate desuccinylase (377 aa).

Zn(2+) is bound at residue His68. Asp70 is an active-site residue. Residue Asp101 participates in Zn(2+) binding. The active-site Proton acceptor is the Glu135. Residues Glu136, Glu164, and His350 each coordinate Zn(2+).

Belongs to the peptidase M20A family. DapE subfamily. In terms of assembly, homodimer. Requires Zn(2+) as cofactor. It depends on Co(2+) as a cofactor.

It catalyses the reaction N-succinyl-(2S,6S)-2,6-diaminopimelate + H2O = (2S,6S)-2,6-diaminopimelate + succinate. Its pathway is amino-acid biosynthesis; L-lysine biosynthesis via DAP pathway; LL-2,6-diaminopimelate from (S)-tetrahydrodipicolinate (succinylase route): step 3/3. Its function is as follows. Catalyzes the hydrolysis of N-succinyl-L,L-diaminopimelic acid (SDAP), forming succinate and LL-2,6-diaminopimelate (DAP), an intermediate involved in the bacterial biosynthesis of lysine and meso-diaminopimelic acid, an essential component of bacterial cell walls. This is Succinyl-diaminopimelate desuccinylase from Aliivibrio fischeri (strain MJ11) (Vibrio fischeri).